A 328-amino-acid polypeptide reads, in one-letter code: tRNA uridine(34) hydroxylase (328 aa).

The 95-residue stretch at 130-224 folds into the Rhodanese domain; it reads LDKDTVVLDT…YGKDPEVQGE (95 aa). C184 acts as the Cysteine persulfide intermediate in catalysis.

It belongs to the TrhO family.

The catalysed reaction is uridine(34) in tRNA + AH2 + O2 = 5-hydroxyuridine(34) in tRNA + A + H2O. Its function is as follows. Catalyzes oxygen-dependent 5-hydroxyuridine (ho5U) modification at position 34 in tRNAs. This Streptococcus pneumoniae serotype 19F (strain G54) protein is tRNA uridine(34) hydroxylase.